The primary structure comprises 206 residues: Tumor protein D54 (206 aa).

Position 1 is an N-acetylmethionine (Met-1). Polar residues predominate over residues 1 to 14 (MDSAGQDINLNSPN). Positions 1–24 (MDSAGQDINLNSPNKGLLSDSMTD) are disordered. Ser-3, Ser-12, Ser-19, and Ser-21 each carry phosphoserine. Residues 38–82 (VEGLTEAEEEELRAELTKVEEEIVTLRQVLAAKERHCGELKRRLG) are a coiled coil. Ser-96, Ser-149, and Ser-161 each carry phosphoserine. Thr-163 is subject to Phosphothreonine. Phosphoserine is present on Ser-166. Thr-173 carries the phosphothreonine modification. The segment covering 175–185 (KSKVVGDRENG) has biased composition (basic and acidic residues). The tract at residues 175 to 206 (KSKVVGDRENGSDNLPSSAGSGDKPLSDPAPF) is disordered. 2 positions are modified to phosphoserine: Ser-192 and Ser-195.

The protein belongs to the TPD52 family. As to quaternary structure, forms a homodimer or heterodimer with other members of the family. Interacts with MAL2.

The sequence is that of Tumor protein D54 (TPD52L2) from Homo sapiens (Human).